The sequence spans 144 residues: Large ribosomal subunit protein uL16 (144 aa).

The protein belongs to the universal ribosomal protein uL16 family. In terms of assembly, part of the 50S ribosomal subunit.

Binds 23S rRNA and is also seen to make contacts with the A and possibly P site tRNAs. The chain is Large ribosomal subunit protein uL16 from Natranaerobius thermophilus (strain ATCC BAA-1301 / DSM 18059 / JW/NM-WN-LF).